We begin with the raw amino-acid sequence, 248 residues long: Adenosylcobinamide-GDP ribazoletransferase (248 aa).

The next 8 helical transmembrane spans lie at 24–44, 47–67, 70–90, 106–126, 134–154, 165–185, 186–206, and 228–248; these read EVNL…IGAW, LVFT…AGLF, IIIT…GLFS, VGAN…ALFL, IGWL…LLFA, LGSI…LFVL, FILG…VILF, and AGGQ…WGLI.

Belongs to the CobS family. It depends on Mg(2+) as a cofactor.

It is found in the cell membrane. It carries out the reaction alpha-ribazole + adenosylcob(III)inamide-GDP = adenosylcob(III)alamin + GMP + H(+). The catalysed reaction is alpha-ribazole 5'-phosphate + adenosylcob(III)inamide-GDP = adenosylcob(III)alamin 5'-phosphate + GMP + H(+). The protein operates within cofactor biosynthesis; adenosylcobalamin biosynthesis; adenosylcobalamin from cob(II)yrinate a,c-diamide: step 7/7. Its function is as follows. Joins adenosylcobinamide-GDP and alpha-ribazole to generate adenosylcobalamin (Ado-cobalamin). Also synthesizes adenosylcobalamin 5'-phosphate from adenosylcobinamide-GDP and alpha-ribazole 5'-phosphate. In Listeria welshimeri serovar 6b (strain ATCC 35897 / DSM 20650 / CCUG 15529 / CIP 8149 / NCTC 11857 / SLCC 5334 / V8), this protein is Adenosylcobinamide-GDP ribazoletransferase.